Reading from the N-terminus, the 718-residue chain is Protein Smaug homolog 1 (718 aa).

Residue serine 168 is modified to Phosphoserine. 3 disordered regions span residues 278–323 (ARGP…EEGS), 416–474 (KAYS…LQPH), and 572–601 (NRGFGQSNSLPTAGSVGGGMGRRNPRQYQI). Positions 323–391 (SGMKDVPAWL…ERQNLLKSLE (69 aa)) constitute an SAM domain. Serine 420 carries the phosphoserine modification. Threonine 424 carries the phosphothreonine modification. Low complexity predominate over residues 453-466 (GAAATGATATPSAG). Arginine 573 carries the post-translational modification Omega-N-methylarginine. At serine 580 the chain carries Phosphoserine.

Belongs to the SMAUG family.

It is found in the cytoplasm. Its subcellular location is the cell projection. The protein resides in the dendrite. The protein localises to the synapse. It localises to the synaptosome. Functionally, acts as a translational repressor of SRE-containing messengers. This is Protein Smaug homolog 1 (SAMD4A) from Homo sapiens (Human).